The chain runs to 214 residues: Uracil phosphoribosyltransferase (214 aa).

5-phospho-alpha-D-ribose 1-diphosphate contacts are provided by residues R107 and 135–143 (DPMLATGKT). Residues I198 and 203–205 (GDA) contribute to the uracil site. D204 contacts 5-phospho-alpha-D-ribose 1-diphosphate.

This sequence belongs to the UPRTase family. Requires Mg(2+) as cofactor.

It catalyses the reaction UMP + diphosphate = 5-phospho-alpha-D-ribose 1-diphosphate + uracil. Its pathway is pyrimidine metabolism; UMP biosynthesis via salvage pathway; UMP from uracil: step 1/1. Its activity is regulated as follows. Allosterically activated by GTP. In terms of biological role, catalyzes the conversion of uracil and 5-phospho-alpha-D-ribose 1-diphosphate (PRPP) to UMP and diphosphate. This chain is Uracil phosphoribosyltransferase, found in Aeropyrum pernix (strain ATCC 700893 / DSM 11879 / JCM 9820 / NBRC 100138 / K1).